The primary structure comprises 392 residues: DNA replication and repair protein RecF (392 aa).

30-37 (GPNAAGKT) contributes to the ATP binding site.

This sequence belongs to the RecF family.

It localises to the cytoplasm. The RecF protein is involved in DNA metabolism; it is required for DNA replication and normal SOS inducibility. RecF binds preferentially to single-stranded, linear DNA. It also seems to bind ATP. The sequence is that of DNA replication and repair protein RecF from Chloroflexus aggregans (strain MD-66 / DSM 9485).